We begin with the raw amino-acid sequence, 545 residues long: Esterase-5C (545 aa).

Positions 1–19 (MLAARLIILLSFYWLSASA) are cleaved as a signal peptide. Cysteines 84 and 103 form a disulfide. Residue Asn113 is glycosylated (N-linked (GlcNAc...) asparagine). The Acyl-ester intermediate role is filled by Ser207. Residues Cys259 and Cys271 are joined by a disulfide bond. Asn421 carries an N-linked (GlcNAc...) asparagine glycan. His467 functions as the Charge relay system in the catalytic mechanism. Asn507 carries an N-linked (GlcNAc...) asparagine glycan. Cysteines 515 and 536 form a disulfide.

This sequence belongs to the type-B carboxylesterase/lipase family.

The protein localises to the secreted. The enzyme catalyses a carboxylic ester + H2O = an alcohol + a carboxylate + H(+). This is Esterase-5C (Est-5C) from Drosophila miranda (Fruit fly).